Consider the following 182-residue polypeptide: Vacuolar protein sorting-associated protein 29 (182 aa).

Residues Asp8, His10, and Asn39 each coordinate Zn(2+). The residue at position 50 (Lys50) is an N6-acetyllysine. Zn(2+) contacts are provided by Asp62, His86, His115, and His117.

It belongs to the VPS29 family. Component of the commander complex consisting of the CCC subcomplex and the retriever subcomplex. Component of the heterotrimeric retriever complex formed by VPS26C, VPS29 and VPS35L; within the complex interacts with VPS35L. Component of the heterotrimeric retromer cargo-selective complex (CSC), also described as vacuolar protein sorting subcomplex (VPS), formed by VPS26 (VPS26A or VPS26B), VPS29 and VPS35. The CSC has a highly elongated structure with VPS26 and VPS29 binding independently at opposite distal ends of VPS35 as central platform. The CSC is believed to associate with variable sorting nexins to form functionally distinct retromer complex variants. The originally described retromer complex (also called SNX-BAR retromer) is a pentamer containing the CSC and a heterodimeric membrane-deforming subcomplex formed between SNX1 or SNX2 and SNX5 or SNX6 (also called SNX-BAR subcomplex); the respective CSC and SNX-BAR subcomplexes associate with low affinity. The CSC associates with SNX3 to form a SNX3-retromer complex. The CSC associates with SNX27, the WASH complex and the SNX-BAR subcomplex to form the SNX27-retromer complex. Interacts with VPS26A, VPS35, SNX1, SNX2, SNX3, SNX27, WASHC5. Interacts with TBC1D5; this interaction is blocked by VPS35L in the retriever complex. Interacts with SNX17; the interaction is indirect; SNX17 (via its C-terminus) interacts with the retriever complex (via VPS26C and VPS35L). Interacts with VPS26B and ANKRD27. In terms of assembly, (Microbial infection) Interacts with human papillomavirus 16 minor capsid protein L2 (via C-terminus); this interaction mediates the transport of the capsid from the early endosome to the Golgi apparatus. In terms of tissue distribution, ubiquitous. Highly expressed in heart, lung, placenta, spleen, peripheral blood leukocytes, thymus, colon skeletal muscle, kidney and brain.

It localises to the cytoplasm. The protein resides in the membrane. Its subcellular location is the endosome membrane. It is found in the early endosome. The protein localises to the late endosome. In terms of biological role, component of the commander complex that is essential for endosomal recycling of transmembrane cargos; the commander complex is composed of the CCC subcomplex and the retriever subcomplex. Component of the retriever complex, which is a heterotrimeric complex related to retromer cargo-selective complex (CSC) and essential for retromer-independent retrieval and recycling of numerous cargos such as integrin alpha-5/beta-1 (ITGA5:ITGB1). Component of the retromer cargo-selective complex (CSC). The CSC is believed to be the core functional component of retromer or respective retromer complex variants acting to prevent missorting of selected transmembrane cargo proteins into the lysosomal degradation pathway. The recruitment of the CSC to the endosomal membrane involves RAB7A and SNX3. The SNX-BAR retromer mediates retrograde transport of cargo proteins from endosomes to the trans-Golgi network (TGN) and is involved in endosome-to-plasma membrane transport for cargo protein recycling. The SNX3-retromer mediates the retrograde endosome-to-TGN transport of WLS distinct from the SNX-BAR retromer pathway. The SNX27-retromer is believed to be involved in endosome-to-plasma membrane trafficking and recycling of a broad spectrum of cargo proteins. The CSC seems to act as recruitment hub for other proteins, such as the WASH complex and TBC1D5. Required to regulate transcytosis of the polymeric immunoglobulin receptor (pIgR-pIgA). In the endosomes, retriever complex drives the retrieval and recycling of NxxY-motif-containing cargo proteins by coupling to SNX17, a cargo essential for the homeostatic maintenance of numerous cell surface proteins associated with processes that include cell migration, cell adhesion, nutrient supply and cell signaling. The recruitment of the retriever complex to the endosomal membrane involves CCC and WASH complexes. Involved in GLUT1 endosome-to-plasma membrane trafficking; the function is dependent of association with ANKRD27. Functionally, (Microbial infection) The heterotrimeric retromer cargo-selective complex (CSC) mediates the exit of human papillomavirus from the early endosome and the delivery to the Golgi apparatus. The protein is Vacuolar protein sorting-associated protein 29 of Homo sapiens (Human).